The following is a 201-amino-acid chain: FMN-dependent NADH:quinone oxidoreductase (201 aa).

Residues Ser-10, 16–18 (SQS), 96–99 (MYNF), and 140–143 (SRGG) contribute to the FMN site.

Belongs to the azoreductase type 1 family. As to quaternary structure, homodimer. It depends on FMN as a cofactor.

The enzyme catalyses 2 a quinone + NADH + H(+) = 2 a 1,4-benzosemiquinone + NAD(+). The catalysed reaction is N,N-dimethyl-1,4-phenylenediamine + anthranilate + 2 NAD(+) = 2-(4-dimethylaminophenyl)diazenylbenzoate + 2 NADH + 2 H(+). Its function is as follows. Quinone reductase that provides resistance to thiol-specific stress caused by electrophilic quinones. Functionally, also exhibits azoreductase activity. Catalyzes the reductive cleavage of the azo bond in aromatic azo compounds to the corresponding amines. The chain is FMN-dependent NADH:quinone oxidoreductase from Salmonella paratyphi A (strain ATCC 9150 / SARB42).